The following is a 470-amino-acid chain: Membrane-bound lytic murein transglycosylase F (470 aa).

Positions 1–24 (MPSLKTKGAAGKFASLLLVLALSA) are cleaved as a signal peptide. The interval 25–262 (CSRPAPPPET…RALERYFGHV (238 aa)) is non-LT domain. The tract at residues 263 to 470 (KRLGSSDILG…RGEDGLPPPG (208 aa)) is LT domain. The active site involves E309.

This sequence in the N-terminal section; belongs to the bacterial solute-binding protein 3 family. The protein in the C-terminal section; belongs to the transglycosylase Slt family.

Its subcellular location is the cell outer membrane. The enzyme catalyses Exolytic cleavage of the (1-&gt;4)-beta-glycosidic linkage between N-acetylmuramic acid (MurNAc) and N-acetylglucosamine (GlcNAc) residues in peptidoglycan, from either the reducing or the non-reducing ends of the peptidoglycan chains, with concomitant formation of a 1,6-anhydrobond in the MurNAc residue.. Murein-degrading enzyme that degrades murein glycan strands and insoluble, high-molecular weight murein sacculi, with the concomitant formation of a 1,6-anhydromuramoyl product. Lytic transglycosylases (LTs) play an integral role in the metabolism of the peptidoglycan (PG) sacculus. Their lytic action creates space within the PG sacculus to allow for its expansion as well as for the insertion of various structures such as secretion systems and flagella. The sequence is that of Membrane-bound lytic murein transglycosylase F from Thiobacillus denitrificans (strain ATCC 25259 / T1).